Here is a 264-residue protein sequence, read N- to C-terminus: Protein ADMETOS (264 aa).

As to expression, paternally imprinted expression in the endosperm.

Functionally, product of a dosage-sensitive gene that contributes to the maintenance of paternally and maternally imprinted gene expression in the endosperm in order to balance parental contributions. Underlies postzygotic reproductive isolation by promoting triploid seed arrest in a genetic dosage-dependent manner, thus being a component of postzygotic interploidy hybridization barriers. The chain is Protein ADMETOS from Arabidopsis thaliana (Mouse-ear cress).